Reading from the N-terminus, the 548-residue chain is Probable malate:quinone oxidoreductase (548 aa).

This sequence belongs to the MQO family. Requires FAD as cofactor.

It carries out the reaction (S)-malate + a quinone = a quinol + oxaloacetate. It functions in the pathway carbohydrate metabolism; tricarboxylic acid cycle; oxaloacetate from (S)-malate (quinone route): step 1/1. The chain is Probable malate:quinone oxidoreductase from Escherichia coli O6:K15:H31 (strain 536 / UPEC).